Here is a 359-residue protein sequence, read N- to C-terminus: tRNA-specific 2-thiouridylase MnmA (359 aa).

ATP contacts are provided by residues 6–13 (AMSGGVDS) and leucine 32. Residue cysteine 101 is the Nucleophile of the active site. Cysteine 101 and cysteine 193 are oxidised to a cystine. Residue glycine 125 participates in ATP binding. An interaction with tRNA region spans residues 143–145 (KDQ). The active-site Cysteine persulfide intermediate is the cysteine 193.

It belongs to the MnmA/TRMU family.

It localises to the cytoplasm. The enzyme catalyses S-sulfanyl-L-cysteinyl-[protein] + uridine(34) in tRNA + AH2 + ATP = 2-thiouridine(34) in tRNA + L-cysteinyl-[protein] + A + AMP + diphosphate + H(+). Its function is as follows. Catalyzes the 2-thiolation of uridine at the wobble position (U34) of tRNA, leading to the formation of s(2)U34. This Mycobacterium sp. (strain KMS) protein is tRNA-specific 2-thiouridylase MnmA.